The primary structure comprises 311 residues: 5'-adenylylsulfate reductase-like 3 (311 aa).

The first 22 residues, 1–22, serve as a signal peptide directing secretion; the sequence is MATRLLCWTALLLPIIAATAAA. The Thioredoxin domain occupies 23–164; sequence SPLPEACPVP…LAAFYRDVSG (142 aa). A glycan (N-linked (GlcNAc...) asparagine) is linked at Asn-139. A helical transmembrane segment spans residues 210–230; it reads LALATAFVILRLLYLLFPKIG. N-linked (GlcNAc...) asparagine glycosylation is found at Asn-281 and Asn-305.

The protein localises to the membrane. The sequence is that of 5'-adenylylsulfate reductase-like 3 (APRL3) from Oryza sativa subsp. japonica (Rice).